The following is a 785-amino-acid chain: Endonuclease MutS2 (785 aa).

G335–T342 is a binding site for ATP. The Smr domain maps to L710 to R785. Positions V764–R785 are disordered.

This sequence belongs to the DNA mismatch repair MutS family. MutS2 subfamily. Homodimer. Binds to stalled ribosomes, contacting rRNA.

Endonuclease that is involved in the suppression of homologous recombination and thus may have a key role in the control of bacterial genetic diversity. Functionally, acts as a ribosome collision sensor, splitting the ribosome into its 2 subunits. Detects stalled/collided 70S ribosomes which it binds and splits by an ATP-hydrolysis driven conformational change. Acts upstream of the ribosome quality control system (RQC), a ribosome-associated complex that mediates the extraction of incompletely synthesized nascent chains from stalled ribosomes and their subsequent degradation. Probably generates substrates for RQC. The chain is Endonuclease MutS2 from Halalkalibacterium halodurans (strain ATCC BAA-125 / DSM 18197 / FERM 7344 / JCM 9153 / C-125) (Bacillus halodurans).